Here is a 259-residue protein sequence, read N- to C-terminus: Indole-3-glycerol phosphate synthase (259 aa).

This sequence belongs to the TrpC family.

It carries out the reaction 1-(2-carboxyphenylamino)-1-deoxy-D-ribulose 5-phosphate + H(+) = (1S,2R)-1-C-(indol-3-yl)glycerol 3-phosphate + CO2 + H2O. It functions in the pathway amino-acid biosynthesis; L-tryptophan biosynthesis; L-tryptophan from chorismate: step 4/5. The sequence is that of Indole-3-glycerol phosphate synthase from Rhodopirellula baltica (strain DSM 10527 / NCIMB 13988 / SH1).